The primary structure comprises 513 residues: ATP synthase subunit alpha (513 aa).

169 to 176 (GDRQTGKT) is an ATP binding site.

The protein belongs to the ATPase alpha/beta chains family. F-type ATPases have 2 components, CF(1) - the catalytic core - and CF(0) - the membrane proton channel. CF(1) has five subunits: alpha(3), beta(3), gamma(1), delta(1), epsilon(1). CF(0) has three main subunits: a(1), b(2) and c(9-12). The alpha and beta chains form an alternating ring which encloses part of the gamma chain. CF(1) is attached to CF(0) by a central stalk formed by the gamma and epsilon chains, while a peripheral stalk is formed by the delta and b chains.

The protein resides in the cell inner membrane. It carries out the reaction ATP + H2O + 4 H(+)(in) = ADP + phosphate + 5 H(+)(out). Functionally, produces ATP from ADP in the presence of a proton gradient across the membrane. The alpha chain is a regulatory subunit. The sequence is that of ATP synthase subunit alpha from Hydrogenovibrio crunogenus (strain DSM 25203 / XCL-2) (Thiomicrospira crunogena).